The following is a 332-amino-acid chain: Glyceraldehyde-3-phosphate dehydrogenase (332 aa).

Residues 10-11 (RI), Asp36, Lys81, and Ser116 each bind NAD(+). D-glyceraldehyde 3-phosphate contacts are provided by residues 150–152 (SCT), Thr181, Arg197, 210–211 (TK), and Arg233. Cys151 (nucleophile) is an active-site residue. Asn314 lines the NAD(+) pocket.

The protein belongs to the glyceraldehyde-3-phosphate dehydrogenase family. As to quaternary structure, homotetramer.

It localises to the cytoplasm. It catalyses the reaction D-glyceraldehyde 3-phosphate + phosphate + NAD(+) = (2R)-3-phospho-glyceroyl phosphate + NADH + H(+). Its pathway is carbohydrate degradation; glycolysis; pyruvate from D-glyceraldehyde 3-phosphate: step 1/5. In terms of biological role, catalyzes the oxidative phosphorylation of glyceraldehyde 3-phosphate (G3P) to 1,3-bisphosphoglycerate (BPG) using the cofactor NAD. The first reaction step involves the formation of a hemiacetal intermediate between G3P and a cysteine residue, and this hemiacetal intermediate is then oxidized to a thioester, with concomitant reduction of NAD to NADH. The reduced NADH is then exchanged with the second NAD, and the thioester is attacked by a nucleophilic inorganic phosphate to produce BPG. The protein is Glyceraldehyde-3-phosphate dehydrogenase (gapA) of Helicobacter pylori (strain J99 / ATCC 700824) (Campylobacter pylori J99).